A 173-amino-acid polypeptide reads, in one-letter code: Large ribosomal subunit protein uL5 (173 aa).

This sequence belongs to the universal ribosomal protein uL5 family. As to quaternary structure, part of the 50S ribosomal subunit; contacts the 5S rRNA and probably tRNA. Forms a bridge to the 30S subunit in the 70S ribosome.

Its function is as follows. This is one of the proteins that bind and probably mediate the attachment of the 5S RNA into the large ribosomal subunit, where it forms part of the central protuberance. In the 70S ribosome it contacts protein S13 of the 30S subunit (bridge B1b), connecting the 2 subunits; this bridge is implicated in subunit movement. May contact the P site tRNA; the 5S rRNA and some of its associated proteins might help stabilize positioning of ribosome-bound tRNAs. This is Large ribosomal subunit protein uL5 from Nitrosopumilus maritimus (strain SCM1).